Consider the following 77-residue polypeptide: Oxyopinin-4a (77 aa).

An N-terminal signal peptide occupies residues 1 to 20 (MKISQVFIFVFLLMISVAWA). Residues 21 to 47 (NEAYEEESNYLSERFDADVEEITPEFR) constitute a propeptide that is removed on maturation. A disulfide bridge links cysteine 51 with cysteine 57.

As to expression, expressed by the venom gland.

The protein resides in the secreted. Its subcellular location is the target cell membrane. Disrupts cell membranes through the formation of pores. Has antibacterial activity against Gram-positive bacteria S.aureus (MIC=10 uM) and B.subtilis (MIC=0.5 uM) as well as Gram-negative bacteria P.fluorescens (MIC=1 uM) and E.coli (MIC=0.5 uM). Has hemolytic activity against human erythrocytes (EC(50)=7 uM). In Oxyopes takobius (Lynx spider), this protein is Oxyopinin-4a.